We begin with the raw amino-acid sequence, 93 residues long: Hematopoietic cell signal transducer (93 aa).

The signal sequence occupies residues 1–18 (MIHLGHILFLLLLPVAAA). At 19-48 (QTTPGERSSLPAFYPGTSGSCSGCGSLSLP) the chain is on the extracellular side. The chain crosses the membrane as a helical span at residues 49 to 69 (LLAGLVAADAVASLLIVGAVF). Over 70 to 93 (LCARPRRSPAQEDGKVYINMPGRG) the chain is Cytoplasmic. At Tyr-86 the chain carries Phosphotyrosine. The tract at residues 86–88 (YIN) is GRB2 binding site. The PIK3R1 binding site stretch occupies residues 86–89 (YINM).

This sequence belongs to the DAP10 family. As to quaternary structure, interacts with CLEC5A. Forms an CLEC5A/TYROBP/HCST trimolecular complex depending almost solely on TYROBP. Homodimer; Disulfide-linked. Heterohexamer composed of four subunits of HCST/DAP10 and two subunits of KLRK1. Interacts (via transmembrane domain) with KLRK1 (via transmembrane domain); the interaction is required for KLRK1 NK cell surface and induces NK cell-mediated cytotoxicity. Interacts with PIK3R1 and GRB2. Interacts with CD300H. In terms of processing, phosphorylated; PIK3R1 and GRB2 associate specifically with tyrosine-phosphorylated HCST. Post-translationally, O-glycosylated. Predominantly expressed in hemopoietic cells such as NK cells, subset of T-cells and monocytes. Detected in leukocytes, spleen, and thymus.

It localises to the membrane. In terms of biological role, transmembrane adapter protein which associates with KLRK1 to form an activation receptor KLRK1-HCST in lymphoid and myeloid cells; this receptor plays a major role in triggering cytotoxicity against target cells expressing cell surface ligands such as MHC class I chain-related MICA and MICB, and UL16-binding proteins (ULBPs); these ligands are up-regulated by stress conditions and pathological state such as viral infection and tumor transformation. Functions as a docking site for PI3-kinase PIK3R1 and GRB2. Interaction of ULBPs with KLRK1-HCST triggers calcium mobilization and activation of the PIK3R1, MAP2K/ERK, and JAK2/STAT5 signaling pathways. Both PIK3R1 and GRB2 are required for full KLRK1-HCST-mediated activation and ultimate killing of target cells. In NK cells, KLRK1-HCST signaling directly induces cytotoxicity and enhances cytokine production initiated via DAP12/TYROBP-associated receptors. In T-cells, it provides primarily costimulation for TCR-induced signals. KLRK1-HCST receptor plays a role in immune surveillance against tumors and is required for cytolysis of tumors cells; indeed, melanoma cells that do not express KLRK1 ligands escape from immune surveillance mediated by NK cells. In Homo sapiens (Human), this protein is Hematopoietic cell signal transducer (HCST).